The chain runs to 111 residues: Nascent polypeptide-associated complex protein (111 aa).

Residues 3-72 form the NAC-A/B domain; it reads GMNPRQMKKL…EEVREVLEIS (70 aa).

It belongs to the NAC-alpha family. In terms of assembly, homodimer. Interacts with the ribosome. Binds ribosomal RNA.

In terms of biological role, contacts the emerging nascent chain on the ribosome. This is Nascent polypeptide-associated complex protein from Thermococcus kodakarensis (strain ATCC BAA-918 / JCM 12380 / KOD1) (Pyrococcus kodakaraensis (strain KOD1)).